Reading from the N-terminus, the 285-residue chain is Flagellar filament core protein flaB2 (285 aa).

The protein belongs to the bacterial flagellin family. As to quaternary structure, the flagellum consists of an outer layer composed of two sheath proteins, flaA1 (44 kDa) and flaA2 (35 kDa) around a core that contains three proteins flaB1 (37 kDa), flaB2 (34 kDa) and flaB3 (32 kDa).

The protein resides in the periplasmic flagellum. The protein localises to the periplasm. Component of the core of the flagella. This is Flagellar filament core protein flaB2 (flaB2) from Brachyspira hyodysenteriae (Treponema hyodysenteriae).